The following is a 640-amino-acid chain: Threonine--tRNA ligase (640 aa).

The TGS domain maps to 1 to 59 (MKIKVKLPDGKEKEYDRGITPAEIAKELGIKKAIGAVVNGELWDLKRPIENDCELRLVT). Residues 240–531 (DHRKLGPQLE…LIEHFAGAFP (292 aa)) form a catalytic region. Positions 332, 383, and 508 each coordinate Zn(2+).

This sequence belongs to the class-II aminoacyl-tRNA synthetase family. As to quaternary structure, homodimer. Zn(2+) serves as cofactor.

It is found in the cytoplasm. The catalysed reaction is tRNA(Thr) + L-threonine + ATP = L-threonyl-tRNA(Thr) + AMP + diphosphate + H(+). Catalyzes the attachment of threonine to tRNA(Thr) in a two-step reaction: L-threonine is first activated by ATP to form Thr-AMP and then transferred to the acceptor end of tRNA(Thr). Also edits incorrectly charged L-seryl-tRNA(Thr). The chain is Threonine--tRNA ligase from Thermotoga maritima (strain ATCC 43589 / DSM 3109 / JCM 10099 / NBRC 100826 / MSB8).